A 410-amino-acid chain; its full sequence is Platelet-activating factor acetylhydrolase IB subunit alpha (410 aa).

The segment at 1–38 (MVLSQRQRDELNRAIADYLRSNGYEEAYSVFKKEAELD) is required for self-association and interaction with PAFAH1B2 and PAFAH1B3. An interaction with NDE1 region spans residues 1-66 (MVLSQRQRDE…SVIRLQKKVM (66 aa)). Residues 1–102 (MVLSQRQRDE…EWIPRPPEKY (102 aa)) form an interaction with NDEL1 region. Positions 7–39 (QRDELNRAIADYLRSNGYEEAYSVFKKEAELDM) constitute a LisH domain. At Lys53 the chain carries N6-acetyllysine. Positions 56-82 (TSVIRLQKKVMELESKLNEAKEEFTSG) form a coiled coil. The tract at residues 83 to 410 (GPLGQKRDPK…DQTVKVWECR (328 aa)) is interaction with dynein and dynactin. WD repeat units lie at residues 106–147 (GHRS…RTLK), 148–187 (GHTDSVQDISFDHSGKLLASCSADMTIKLWDFQGFECIRT), 190–229 (GHDHNVSSVAIMPNGDHIVSAARDKTIKMWEVQTGYCVKT), 232–271 (GHREWVRMVRPNQDGTLIASCSNDQTVRVWVVATKECKAE), 274–333 (EHEH…CLMT), 336–377 (GHDN…KTLN), and 378–410 (AHEHFVTSLDFHKTAPYVVTGSVDQTVKVWECR). Ser109 is modified (phosphoserine). The interaction with DCX stretch occupies residues 367–409 (YKNKRCMKTLNAHEHFVTSLDFHKTAPYVVTGSVDQTVKVWEC). Residues 388–410 (FHKTAPYVVTGSVDQTVKVWECR) are interaction with NDEL1.

The protein belongs to the WD repeat LIS1/nudF family. As to quaternary structure, can self-associate. Component of the cytosolic PAF-AH (I) heterotetrameric enzyme, which is composed of PAFAH1B1 (beta), PAFAH1B2 (alpha2) and PAFAH1B3 (alpha1) subunits. The catalytic activity of the enzyme resides in the alpha1 (PAFAH1B3) and alpha2 (PAFAH1B2) subunits, whereas the beta subunit (PAFAH1B1) has regulatory activity. Trimer formation is not essential for the catalytic activity. Interacts with the catalytic dimer of PAF-AH (I) heterotetrameric enzyme: interacts with PAFAH1B2 homodimer (alpha2/alpha2 homodimer), PAFAH1B3 homodimer (alpha1/alpha1 homodimer) and PAFAH1B2-PAFAH1B3 heterodimer (alpha2/alpha1 heterodimer). Interacts with DCX, dynein, dynactin, IQGAP1, KATNB1, NDE1, NDEL1, NUDC and RSN. Interacts with DISC1, and this interaction is enhanced by NDEL1. Interacts with DAB1 when DAB1 is phosphorylated in response to RELN/reelin signaling. Interacts with INTS13. Interacts with DCDC1.

Its subcellular location is the cytoplasm. It is found in the cytoskeleton. It localises to the microtubule organizing center. The protein localises to the centrosome. The protein resides in the spindle. Its subcellular location is the nucleus membrane. Functionally, regulatory subunit (beta subunit) of the cytosolic type I platelet-activating factor (PAF) acetylhydrolase (PAF-AH (I)), an enzyme that catalyzes the hydrolyze of the acetyl group at the sn-2 position of PAF and its analogs and participates in PAF inactivation. Regulates the PAF-AH (I) activity in a catalytic dimer composition-dependent manner. Positively regulates the activity of the minus-end directed microtubule motor protein dynein. May enhance dynein-mediated microtubule sliding by targeting dynein to the microtubule plus end. Required for several dynein- and microtubule-dependent processes such as the maintenance of Golgi integrity, the peripheral transport of microtubule fragments and the coupling of the nucleus and centrosome. Required during brain development for the proliferation of neuronal precursors and the migration of newly formed neurons from the ventricular/subventricular zone toward the cortical plate. Neuronal migration involves a process called nucleokinesis, whereby migrating cells extend an anterior process into which the nucleus subsequently translocates. During nucleokinesis dynein at the nuclear surface may translocate the nucleus towards the centrosome by exerting force on centrosomal microtubules. Also required for proper activation of Rho GTPases and actin polymerization at the leading edge of locomoting cerebellar neurons and postmigratory hippocampal neurons in response to calcium influx triggered via NMDA receptors. May also play a role in other forms of cell locomotion including the migration of fibroblasts during wound healing. Required for dynein recruitment to microtubule plus ends and BICD2-bound cargos. May modulate the Reelin pathway through interaction of the PAF-AH (I) catalytic dimer with VLDLR. The protein is Platelet-activating factor acetylhydrolase IB subunit alpha of Sus scrofa (Pig).